A 358-amino-acid polypeptide reads, in one-letter code: Alanine racemase (358 aa).

Catalysis depends on Lys-35, which acts as the Proton acceptor; specific for D-alanine. Lys-35 carries the post-translational modification N6-(pyridoxal phosphate)lysine. A substrate-binding site is contributed by Arg-130. Tyr-255 functions as the Proton acceptor; specific for L-alanine in the catalytic mechanism. Residue Met-303 coordinates substrate.

It belongs to the alanine racemase family. Pyridoxal 5'-phosphate serves as cofactor.

The catalysed reaction is L-alanine = D-alanine. Its pathway is amino-acid biosynthesis; D-alanine biosynthesis; D-alanine from L-alanine: step 1/1. Functionally, catalyzes the interconversion of L-alanine and D-alanine. May also act on other amino acids. This chain is Alanine racemase (alr), found in Shewanella sp. (strain ANA-3).